Here is a 31-residue protein sequence, read N- to C-terminus: Cytochrome b6-f complex subunit 6 (31 aa).

A helical transmembrane segment spans residues 4 to 24 (IFSYIALLLSALVITLTCYIG).

Belongs to the PetL family. In terms of assembly, the 4 large subunits of the cytochrome b6-f complex are cytochrome b6, subunit IV (17 kDa polypeptide, PetD), cytochrome f and the Rieske protein, while the 4 small subunits are PetG, PetL, PetM and PetN. The complex functions as a dimer.

The protein localises to the plastid. It is found in the chloroplast thylakoid membrane. Its function is as follows. Component of the cytochrome b6-f complex, which mediates electron transfer between photosystem II (PSII) and photosystem I (PSI), cyclic electron flow around PSI, and state transitions. PetL is important for photoautotrophic growth as well as for electron transfer efficiency and stability of the cytochrome b6-f complex. The polypeptide is Cytochrome b6-f complex subunit 6 (Chlorella vulgaris (Green alga)).